A 446-amino-acid polypeptide reads, in one-letter code: tRNA-2-methylthio-N(6)-dimethylallyladenosine synthase (446 aa).

The 117-residue stretch at 6-122 folds into the MTTase N-terminal domain; it reads RRYHITTFGC…LGDLLQQVFD (117 aa). Cysteine 15, cysteine 51, cysteine 85, cysteine 157, cysteine 161, and cysteine 164 together coordinate [4Fe-4S] cluster. In terms of domain architecture, Radical SAM core spans 143-380; the sequence is RDSNITAWVN…NHLVATKAAE (238 aa). The region spanning 383 to 446 is the TRAM domain; the sequence is QRYLGRIEEI…RPFSLTGVIF (64 aa).

The protein belongs to the methylthiotransferase family. MiaB subfamily. As to quaternary structure, monomer. The cofactor is [4Fe-4S] cluster.

It localises to the cytoplasm. The catalysed reaction is N(6)-dimethylallyladenosine(37) in tRNA + (sulfur carrier)-SH + AH2 + 2 S-adenosyl-L-methionine = 2-methylsulfanyl-N(6)-dimethylallyladenosine(37) in tRNA + (sulfur carrier)-H + 5'-deoxyadenosine + L-methionine + A + S-adenosyl-L-homocysteine + 2 H(+). In terms of biological role, catalyzes the methylthiolation of N6-(dimethylallyl)adenosine (i(6)A), leading to the formation of 2-methylthio-N6-(dimethylallyl)adenosine (ms(2)i(6)A) at position 37 in tRNAs that read codons beginning with uridine. The sequence is that of tRNA-2-methylthio-N(6)-dimethylallyladenosine synthase from Microcystis aeruginosa (strain NIES-843 / IAM M-2473).